Reading from the N-terminus, the 199-residue chain is Recombination protein RecR (199 aa).

The segment at 58 to 73 adopts a C4-type zinc-finger fold; that stretch reads CSVCTNLTDRDPCRIC. The 96-residue stretch at 81-176 folds into the Toprim domain; that stretch reads AVICVVEEPR…KVTRIAHGLP (96 aa).

It belongs to the RecR family.

In terms of biological role, may play a role in DNA repair. It seems to be involved in an RecBC-independent recombinational process of DNA repair. It may act with RecF and RecO. In Heliobacterium modesticaldum (strain ATCC 51547 / Ice1), this protein is Recombination protein RecR.